Reading from the N-terminus, the 977-residue chain is Serine/threonine-protein kinase N2 (977 aa).

REM-1 domains follow at residues 24–100, 114–194, and 200–280; these read NLDF…HIVV, DTPK…TSEI, and DVTT…ELPK. In terms of domain architecture, C2 spans 298 to 468; it reads PPNSPRQSIM…LYLEPQGTLF (171 aa). Disordered stretches follow at residues 342–381 and 531–576; these read GRSKTASVSLPGWSPSEARSSFMSRGNKNKSGSSRTLSKS and AADL…KRNS. Polar residues predominate over residues 358-378; it reads EARSSFMSRGNKNKSGSSRTL. The 260-residue stretch at 650-909 folds into the Protein kinase domain; it reads FKCVAVLGRG…AEEVKRHPFF (260 aa). ATP is bound by residues 656 to 664 and Lys679; that span reads LGRGHFGKV. Asp775 (proton acceptor) is an active-site residue. The AGC-kinase C-terminal domain occupies 910 to 977; the sequence is RDMDWPGLLA…ADFDYIADWC (68 aa).

Belongs to the protein kinase superfamily. AGC Ser/Thr protein kinase family. PKC subfamily. Post-translationally, autophosphorylated. Phosphorylated. In terms of processing, proteolytically cleaved.

The protein localises to the cytoplasm. The protein resides in the nucleus. It localises to the membrane. It is found in the cell projection. Its subcellular location is the lamellipodium. The protein localises to the cytoskeleton. The protein resides in the cleavage furrow. It localises to the midbody. It is found in the cell junction. The catalysed reaction is L-seryl-[protein] + ATP = O-phospho-L-seryl-[protein] + ADP + H(+). It catalyses the reaction L-threonyl-[protein] + ATP = O-phospho-L-threonyl-[protein] + ADP + H(+). Kinase activity is activated upon binding to GTP-bound Rho/Rac GTPases. Activated by lipids, particularly cardiolipin and to a lesser extent by other acidic phospholipids and unsaturated fatty acids. Two specific sites, Thr-809 (activation loop of the kinase domain) and Thr-951 (turn motif), may be needed to be phosphorylated for its full activation. Functionally, pkc-related serine/threonine-protein kinase and Rho/Rac effector protein that participates in specific signal transduction responses in the cell. May play a role in the regulation of cell cycle progression, actin cytoskeleton assembly, cell migration, cell adhesion and transcription activation signaling processes. This is Serine/threonine-protein kinase N2 (pkn2) from Danio rerio (Zebrafish).